Reading from the N-terminus, the 176-residue chain is ATP-dependent protease subunit HslV (176 aa).

Thr5 is a catalytic residue. Na(+) is bound by residues Ala161, Cys164, and Thr167.

This sequence belongs to the peptidase T1B family. HslV subfamily. In terms of assembly, a double ring-shaped homohexamer of HslV is capped on each side by a ring-shaped HslU homohexamer. The assembly of the HslU/HslV complex is dependent on binding of ATP.

The protein localises to the cytoplasm. The catalysed reaction is ATP-dependent cleavage of peptide bonds with broad specificity.. With respect to regulation, allosterically activated by HslU binding. Protease subunit of a proteasome-like degradation complex believed to be a general protein degrading machinery. The sequence is that of ATP-dependent protease subunit HslV from Pelotomaculum thermopropionicum (strain DSM 13744 / JCM 10971 / SI).